Here is a 270-residue protein sequence, read N- to C-terminus: Malonyl-[acyl-carrier protein] O-methyltransferase (270 aa).

The protein belongs to the methyltransferase superfamily.

It carries out the reaction malonyl-[ACP] + S-adenosyl-L-methionine = malonyl-[ACP] methyl ester + S-adenosyl-L-homocysteine. The protein operates within cofactor biosynthesis; biotin biosynthesis. Its function is as follows. Converts the free carboxyl group of a malonyl-thioester to its methyl ester by transfer of a methyl group from S-adenosyl-L-methionine (SAM). It allows to synthesize pimeloyl-ACP via the fatty acid synthetic pathway. This is Malonyl-[acyl-carrier protein] O-methyltransferase from Magnetococcus marinus (strain ATCC BAA-1437 / JCM 17883 / MC-1).